The primary structure comprises 718 residues: Catalase-peroxidase (718 aa).

The segment at residues 92 to 220 (WHAAGTYRTA…LASVMMGLIY (129 aa)) is a cross-link (tryptophyl-tyrosyl-methioninium (Trp-Tyr) (with M-246)). The Proton acceptor role is filled by His93. The segment at residues 220–246 (YVNPEGVDGHPDPLKTANDVRVTFERM) is a cross-link (tryptophyl-tyrosyl-methioninium (Tyr-Met) (with W-92)). Residue His261 participates in heme b binding.

The protein belongs to the peroxidase family. Peroxidase/catalase subfamily. In terms of assembly, homodimer or homotetramer. Requires heme b as cofactor. In terms of processing, formation of the three residue Trp-Tyr-Met cross-link is important for the catalase, but not the peroxidase activity of the enzyme.

It carries out the reaction H2O2 + AH2 = A + 2 H2O. The catalysed reaction is 2 H2O2 = O2 + 2 H2O. Its function is as follows. Bifunctional enzyme with both catalase and broad-spectrum peroxidase activity. The sequence is that of Catalase-peroxidase from Shewanella halifaxensis (strain HAW-EB4).